Here is a 395-residue protein sequence, read N- to C-terminus: Putative gustatory receptor 93b (395 aa).

Over 1 to 18 the chain is Cytoplasmic; the sequence is MSGLLVMPRILRCLNVSR. The chain crosses the membrane as a helical span at residues 19-39; sequence ISAILLRSCFLYGTFFGVITF. Over 40 to 89 the chain is Extracellular; the sequence is RIERKDSQLVAINRRGYLWICLVIRLLASCFYGYSYDAWSGQYEDMYLRA. Residues 90-110 form a helical membrane-spanning segment; sequence FFGFRLIGCLICSVIILVMQF. Residues 111-153 lie on the Cytoplasmic side of the membrane; the sequence is WFGEELINLVNRFLQLFRRMQSLTNSPKNRFGDRAEFLLMFSK. A helical membrane pass occupies residues 154–174; sequence VFSLLFVFMAFRLMLSPWFLL. Residues 175–183 are Extracellular-facing; the sequence is TLVCDLYTS. A helical membrane pass occupies residues 184 to 204; sequence VGTGMITHLCFVGYLSIGVLY. Residues 205–267 lie on the Cytoplasmic side of the membrane; the sequence is RDLNNYVDCQ…RSFQQLFDLP (63 aa). The helical transmembrane segment at 268 to 288 threads the bilayer; that stretch reads LFLSLAQSLLAMSMVSYHAIL. Residues 289–293 are Extracellular-facing; the sequence is RRQYS. The helical transmembrane segment at 294–314 threads the bilayer; the sequence is FNLWGLVIKLLIDVVLLTMSV. At 315–369 the chain is on the cytoplasmic side; that stretch reads HSAVNGSRLIRRLSFENFYVTDSQSYHQKLELFLGRLQHQELRVFPLGLFEVSNE. A helical transmembrane segment spans residues 370 to 390; the sequence is LTLFFLSAMVTYLVFLVQYGM. The Extracellular segment spans residues 391 to 395; the sequence is QSQQI.

Belongs to the insect chemoreceptor superfamily. Gustatory receptor (GR) family. Gr93a subfamily. As to expression, in larvae, is expressed in neurons of the terminal external chemosensory organ and of the dorsal pharyngeal sense organ.

It is found in the cell membrane. In terms of biological role, probable gustatory receptor which mediates acceptance or avoidance behavior, depending on its substrates. The chain is Putative gustatory receptor 93b (Gr93b) from Drosophila melanogaster (Fruit fly).